The chain runs to 132 residues: UPF0299 membrane protein YohJ (132 aa).

The next 4 helical transmembrane spans lie at 8–28 (IWQY…GIFI), 31–51 (LLPV…VLLA), 63–83 (GCYL…VGVM), and 93–113 (FGPV…VVSW).

The protein belongs to the UPF0299 family.

It is found in the cell inner membrane. The polypeptide is UPF0299 membrane protein YohJ (Escherichia fergusonii (strain ATCC 35469 / DSM 13698 / CCUG 18766 / IAM 14443 / JCM 21226 / LMG 7866 / NBRC 102419 / NCTC 12128 / CDC 0568-73)).